A 182-amino-acid chain; its full sequence is ATP-dependent protease subunit HslV (182 aa).

Thr-10 is an active-site residue. 3 residues coordinate Na(+): Ala-166, Cys-169, and Ser-172.

The protein belongs to the peptidase T1B family. HslV subfamily. A double ring-shaped homohexamer of HslV is capped on each side by a ring-shaped HslU homohexamer. The assembly of the HslU/HslV complex is dependent on binding of ATP.

The protein resides in the cytoplasm. It catalyses the reaction ATP-dependent cleavage of peptide bonds with broad specificity.. Allosterically activated by HslU binding. Protease subunit of a proteasome-like degradation complex believed to be a general protein degrading machinery. This is ATP-dependent protease subunit HslV from Rickettsia peacockii (strain Rustic).